A 297-amino-acid chain; its full sequence is Phosphatidylinositol N-acetylglucosaminyltransferase subunit C (297 aa).

4 consecutive transmembrane segments (helical) span residues 67–87 (VFVV…WLFG), 88–108 (TGLA…GGEG), 153–173 (AVFM…AAIV), and 239–259 (ALGG…LLLI).

It belongs to the PIGC family. Component of the glycosylphosphatidylinositol-N-acetylglucosaminyltransferase (GPI-GnT) complex composed at least by PIGA, PIGC, PIGH, PIGP, PIGQ, PIGY and DPM2. Interacts with PIGQ. Interacts with the heterodimer PIGA:PIGH.

It localises to the endoplasmic reticulum membrane. It participates in glycolipid biosynthesis; glycosylphosphatidylinositol-anchor biosynthesis. Part of the glycosylphosphatidylinositol-N-acetylglucosaminyltransferase (GPI-GnT) complex that catalyzes the transfer of N-acetylglucosamine from UDP-N-acetylglucosamine to phosphatidylinositol and participates in the first step of GPI biosynthesis. The chain is Phosphatidylinositol N-acetylglucosaminyltransferase subunit C from Bos taurus (Bovine).